A 620-amino-acid chain; its full sequence is Preterminal protein (620 aa).

The Nuclear localization signal motif lies at 356–365 (RLPMRRRRRR). The residue at position 545 (S545) is an O-(5'-phospho-DNA)-serine.

Belongs to the adenoviridae terminal protein family. In terms of assembly, heterodimer with the polymerase; this heterodimer binds to bp 9 to 18 of the genome. Interacts with host POU2F1; POU2F1 binds to the auxiliary sequences in the inverted terminal repeats and tethers the pTP-POL heterodimer to the origin DNA thereby participating in the assembly of the pre-initiation complex (POL-TP-DBP-NFIA-POU2F1). Post-translationally, preterminal protein is used to replicate viral genome, upon genomic encapsidation it is processed first into iTP and finally into TP by adenovirus protease.

It is found in the host nucleus matrix. Functionally, protein covalently bound to the viral DNA that acts as a primer for viral genomic replication by DNA strand displacement. Assembles on the viral origin of replication in an initiation complex with viral polymerase, DBP, host NFIA and host POU2F1/OCT1. During initiation, the polymerase covalently couples the first dCTP with Ser-580 of pTP. The terminal protein stimulates the template activity over 20 fold compared to protein-free templates. Neo-synthesized viral genomes are linked to two preterminal proteins, one for each 5' end. These new genomes are encapsidated in the nucleus, and during capsid maturation by viral protease, preterminal protein is first cleaved into intermediary (iTP), then into mature TP. May play a role in host nuclear matrix localization of genomic DNA. This Bovine adenovirus 2 (BAdV-2) protein is Preterminal protein.